Here is a 502-residue protein sequence, read N- to C-terminus: UTP--glucose-1-phosphate uridylyltransferase 2 (502 aa).

The tract at residues 1–20 (MMKPDLNSPLPQSPQLQAFG) is disordered. The span at 9–20 (PLPQSPQLQAFG) shows a compositional bias: polar residues. Residues 114–117 (LNGG), Lys-128, Gln-191, and Gly-220 contribute to the UTP site. 116 to 117 (GG) is a substrate binding site. Residues His-221 and 249–251 (NVD) contribute to the substrate site. UTP contacts are provided by Asp-251 and Lys-390.

The protein belongs to the UDPGP type 1 family.

The catalysed reaction is alpha-D-glucose 1-phosphate + UTP + H(+) = UDP-alpha-D-glucose + diphosphate. Its function is as follows. Plays a central role as a glucosyl donor in cellular metabolic pathways. The chain is UTP--glucose-1-phosphate uridylyltransferase 2 (ugpB) from Dictyostelium discoideum (Social amoeba).